The sequence spans 404 residues: Putative nitronate monooxygenase (404 aa).

Position 41 to 43 (41 to 43) interacts with FMN; that stretch reads PMA. His-224 (proton acceptor) is an active-site residue. His-224 is a binding site for substrate. FMN-binding positions include 270 to 272 and 293 to 294; these read AGG and GT.

Belongs to the nitronate monooxygenase family. NMO class I subfamily. FMN is required as a cofactor.

It localises to the cytoplasm. It catalyses the reaction ethylnitronate + O2 = chemical entity + acetaldehyde + nitrite + H(+). Functionally, catalyzes the oxidation of alkyl nitronates to produce the corresponding carbonyl compounds and nitrites. The polypeptide is Putative nitronate monooxygenase (Saccharomyces cerevisiae (strain ATCC 204508 / S288c) (Baker's yeast)).